Here is a 691-residue protein sequence, read N- to C-terminus: MPRDFPLDRVRNIGIAAHIDAGKTTTTERILFYSGVVHKIGEVHDGAAVTDWMAQERERGITITAAAISTAWNDHRINIIDTPGHVDFTIEVERSMRVLDGVIAVFCAVGGVQPQSETVWRQADRYSVPRMVFVNKMDRTGADFLKVYGQIVDRLKAKAAPIQLPIGAEGDLSGIIDLVANKAYIYKNDLGTDIEEAEIPADMADEAAEWRAKLMESVAENDEELIEKFLETGELTEAELKKGIRDGVLKHGLVPMLCGSAFKNKGVQLVLDAVVDYLPAPIDVPPIQGVLADGSEAVRPSDDNAPFSALAFKVMADPYGKLTFVRMYSGVLSKGSYVMNSTKDVKERISRLVVLKADDREEVDQLRAGDLGAVLGLKNTTTGDTLCDPDNSIVLETLFIPEPVISVAVEPKTKGDMEKLSKALTSLSEEDPTFRVSTDEETGQTVIAGMGELHLEILVDRMLREFKVEANIGAPQVSYRETIRSSSKGEGKFARQTGGKGQYGHVVIEMEPGEPGTGFEFINKIVGGAVPKEFIKPAEMGMKETCESGVIAGFPLIDVKCTMVDGSYHDVDSSEMAFKIAGSMAFKDGVKKCNPVLLEPMMKVEVEVPEDFLGSIIGDLSSRRGQVEGQSIDDGISKVSAKVPLAEMFGYATQLRSMTQGRGIFSMEFSRYEEVPRNVAEAIISKNQGNS.

A tr-type G domain is found at 8–282 (DRVRNIGIAA…AVVDYLPAPI (275 aa)). GTP is bound by residues 17-24 (AHIDAGKT), 81-85 (DTPGH), and 135-138 (NKMD).

The protein belongs to the TRAFAC class translation factor GTPase superfamily. Classic translation factor GTPase family. EF-G/EF-2 subfamily.

The protein resides in the cytoplasm. Catalyzes the GTP-dependent ribosomal translocation step during translation elongation. During this step, the ribosome changes from the pre-translocational (PRE) to the post-translocational (POST) state as the newly formed A-site-bound peptidyl-tRNA and P-site-bound deacylated tRNA move to the P and E sites, respectively. Catalyzes the coordinated movement of the two tRNA molecules, the mRNA and conformational changes in the ribosome. The chain is Elongation factor G from Synechococcus sp. (strain RCC307).